An 85-amino-acid chain; its full sequence is U4-theraphotoxin-Hhn1a (85 aa).

Residues 1-22 form the signal peptide; that stretch reads MKVTLIAILTCAAALVLHTTAA. A propeptide spanning residues 23 to 48 is cleaved from the precursor; that stretch reads EELEAESQLMEVGMPDTELAAVDEER. Cystine bridges form between C52-C66, C56-C77, and C71-C82.

It belongs to the neurotoxin 12 (Hwtx-2) family. 02 (Hwtx-2) subfamily. As to quaternary structure, monomer. Expressed by the venom gland.

It is found in the secreted. Neurotoxin active on both insects and mammals. The chain is U4-theraphotoxin-Hhn1a from Cyriopagopus hainanus (Chinese bird spider).